Here is a 312-residue protein sequence, read N- to C-terminus: G-protein coupled receptor BILF1 (312 aa).

Topologically, residues 1 to 40 (MLSTMAPGSTVGTLVANMTSVNATEDACTKSYSAFLSGMT) are extracellular. 2 disulfide bridges follow: C28–C258 and C97–C174. The chain crosses the membrane as a helical span at residues 41-61 (SLLLVLLILLTLAGILFIIFV). The Cytoplasmic portion of the chain corresponds to 62–67 (RKLVHR). Residues 68–88 (MDVWLIALLIELLLWVLGKMI) traverse the membrane as a helical segment. Topologically, residues 89 to 95 (QEFSSTG) are extracellular. Residues 96–116 (LCLLTQNMMFLGLMCSVWTHL) form a helical membrane-spanning segment. Residues 117-138 (GMALEKTLALFSRTPKRTSHRN) are Cytoplasmic-facing. Residues 139-159 (VCLYLMGVFCLVLLLIIILLI) form a helical membrane-spanning segment. Residues 160 to 192 (TMGPDANLNRGPNMCREGPTKGMHTAVQGLKAG) are Extracellular-facing. Residues 193–213 (CYLLAAVLIVLLTVIIIWKLL) form a helical membrane-spanning segment. Residues 214-228 (RTKFGRKPRLICNVT) are Cytoplasmic-facing. Residues 229 to 249 (FTGLICAFSWFMLSLPLLFLG) form a helical membrane-spanning segment. Over 250-269 (EAGSLGFDCTESLVARYYPG) the chain is Extracellular. The helical transmembrane segment at 270-290 (PAACLALLLIILYAWSFSHFM) threads the bilayer. Over 291–312 (DSLKNQVTVTARYFRRVPSQST) the chain is Cytoplasmic.

This sequence belongs to the Epstein-Barr virus BILF1 protein family. In terms of assembly, interacts with host CXCR4 to form higher-order heterooligomers. Interacts with host Gi heterotrimer.

It is found in the host cell membrane. The protein resides in the host mitochondrion outer membrane. Its function is as follows. Constitutively active, ligand-independent G protein-coupled receptor that has immunoevasive and oncogenic activities. Couples with the host inhibitory G protein (Gi) in order to disrupt the host chemokine signaling. As a consequence of its constitutive activity, mediates host CXCR4 inhibition. Enhances degradation of host major histocompatibility complex class I antigens via lysosomes, thereby modulating the antigen presentation to cytotoxic T cells. Targets selectively HLA-A, HLA-Band HLA-E molecules. Targets also newly synthesized MHC-I/peptide complexes en route to the host cell surface. Inhibits the host EIF2AK2/PKR phosphorylation. Displays tranforming activity. Utilizes its C-terminal tail to trigger host MAVS UFMylation via PARK2, resulting in selective MAVS removal from mitochondrial membranes and routing to lysosomes to prevent viral activation of the NLRP3 inflammasome. The protein is G-protein coupled receptor BILF1 of Homo sapiens (Human).